A 1476-amino-acid chain; its full sequence is Coiled-coil domain-containing protein 88B (1476 aa).

Positions 253-481 form a coiled coil; sequence SHHLALQLAN…RGLLQVLQGQ (229 aa). 4 disordered regions span residues 427–451, 509–706, 825–866, and 1323–1476; these read QRSL…SLQD, VAFD…EGAL, RRQW…ERRE, and LMRP…SLSQ. Ser436 bears the Phosphoserine mark. Residues 572 to 586 are compositionally biased toward polar residues; it reads SDWSPQESGSPVETQ. Position 596 is a phosphoserine (Ser596). Composition is skewed to basic and acidic residues over residues 678-690, 825-834, and 842-866; these read EARE…EGTV, RRQWEREGSR, and AEER…ERRE. Residues 720–1303 are a coiled coil; that stretch reads LASGVAEQEA…KIMDQYRVLE (584 aa). A phosphoserine mark is found at Ser1348 and Ser1379. Positions 1448–1469 are enriched in basic and acidic residues; it reads LQEHETDANREGPEVQEPEKRP.

It belongs to the CCDC88 family. As to quaternary structure, homodimer. Interacts with DOCK8. Interacts (via C-terminus) with intact microtubules. Interacts with dynein-dynactin motor complex. Interacts (via C-terminus) with HSPA5. Expressed in endothelium (at protein level). Expressed in NK cells (at protein level).

It is found in the membrane. The protein resides in the cytoplasm. The protein localises to the cytoskeleton. Its subcellular location is the microtubule organizing center. It localises to the endoplasmic reticulum. It is found in the golgi apparatus. Functionally, acts as a positive regulator of T-cell maturation and inflammatory function. Required for several functions of T-cells, in both the CD4(+) and the CD8(+) compartments and this includes expression of cell surface markers of activation, proliferation, and cytokine production in response to specific or non-specific stimulation. Enhances NK cell cytotoxicity by positively regulating polarization of microtubule-organizing center (MTOC) to cytotoxic synapse, lytic granule transport along microtubules, and dynein-mediated clustering to MTOC. Interacts with HSPA5 and stabilizes the interaction between HSPA5 and ERN1, leading to suppression of ERN1-induced JNK activation and endoplasmic reticulum stress-induced apoptosis. The polypeptide is Coiled-coil domain-containing protein 88B (CCDC88B) (Homo sapiens (Human)).